Here is a 490-residue protein sequence, read N- to C-terminus: MESKEISIRSRTPPSKLYSIQSCIGRGNFGDVYKAVDRVTQEIVAIKVVNLEHSDEDIELLAQEIFFLAELKSPLITNYIATMLEDVSMWIVMEYCGGGSCSDLLKRSYVNGLPEEKVSFIIHEVTLGLKYLHEQRKIHRDIKAANILLNEEGMVKLGDFGVSGHIRSTLKRDTFVGTPYWMAPEVVCCEVDGYNEKADIWSLGITTYELLKGLPPLSKYDPMKVMTNLPKRKPPKLQGPFSDAAKDFVAGCLVKTPADRPSAYNLLSFEFVKNITITNLKSDVDLIKQKKVQERYTKVPKYPLQNRLYKNSNTVRGKEFWNFESTRLSTTQISKEELSPITQDSPTSSLNMESPYLLHGQTVTPITNPSSSSFRKCTQPVFELDSGMDIDSGCPNAQAETEIVPLSNHNKKHKKNDIQALKIEKFDYLKNIVSHILNRMYDRARDDETRKYVNEMLKQFIKTEANVPGFNEVFIEEISLRIEAIKKGFV.

Residues 18-272 (YSIQSCIGRG…AYNLLSFEFV (255 aa)) form the Protein kinase domain. ATP-binding positions include 24–32 (IGRGNFGDV) and Lys-47. Catalysis depends on Asp-141, which acts as the Proton acceptor.

This sequence belongs to the protein kinase superfamily. STE Ser/Thr protein kinase family. STE20 subfamily.

The protein resides in the nucleus. It localises to the cytoplasm. The enzyme catalyses L-seryl-[protein] + ATP = O-phospho-L-seryl-[protein] + ADP + H(+). The catalysed reaction is L-threonyl-[protein] + ATP = O-phospho-L-threonyl-[protein] + ADP + H(+). Its function is as follows. Serine/threonine protein kinase required for spore wall development. This Saccharomyces cerevisiae (strain ATCC 204508 / S288c) (Baker's yeast) protein is Sporulation-specific protein 1 (SPS1).